The following is a 284-amino-acid chain: Pantothenate synthetase (284 aa).

Residue M30 to H37 participates in ATP binding. H37 (proton donor) is an active-site residue. Residue Q61 participates in (R)-pantoate binding. Q61 contributes to the beta-alanine binding site. G147–D150 lines the ATP pocket. A (R)-pantoate-binding site is contributed by Q153. ATP contacts are provided by residues V176 and K184 to R187.

This sequence belongs to the pantothenate synthetase family. In terms of assembly, homodimer.

It localises to the cytoplasm. It catalyses the reaction (R)-pantoate + beta-alanine + ATP = (R)-pantothenate + AMP + diphosphate + H(+). It functions in the pathway cofactor biosynthesis; (R)-pantothenate biosynthesis; (R)-pantothenate from (R)-pantoate and beta-alanine: step 1/1. Catalyzes the condensation of pantoate with beta-alanine in an ATP-dependent reaction via a pantoyl-adenylate intermediate. This Lysinibacillus sphaericus (strain C3-41) protein is Pantothenate synthetase.